Here is a 463-residue protein sequence, read N- to C-terminus: Chromosomal replication initiator protein DnaA (463 aa).

Positions 1–83 are domain I, interacts with DnaA modulators; the sequence is MSLTLWQQCL…LRFEVGSKPV (83 aa). The interval 83–126 is domain II; it reads VAQAISQPVMVSAHASAPGVVSRPAPTRPSWDNVPALAELSYRS. Positions 127 to 343 are domain III, AAA+ region; that stretch reads NVNTKHNFDN…GALNRVIANA (217 aa). Residues Gly171, Gly173, Lys174, and Thr175 each coordinate ATP. Residues 344–463 are domain IV, binds dsDNA; sequence NFTGRAITID…FSNLIRTLSS (120 aa).

This sequence belongs to the DnaA family. Oligomerizes as a right-handed, spiral filament on DNA at oriC.

The protein localises to the cytoplasm. Its function is as follows. Plays an essential role in the initiation and regulation of chromosomal replication. ATP-DnaA binds to the origin of replication (oriC) to initiate formation of the DNA replication initiation complex once per cell cycle. Binds the DnaA box (a 9 base pair repeat at the origin) and separates the double-stranded (ds)DNA. Forms a right-handed helical filament on oriC DNA; dsDNA binds to the exterior of the filament while single-stranded (ss)DNA is stabiized in the filament's interior. The ATP-DnaA-oriC complex binds and stabilizes one strand of the AT-rich DNA unwinding element (DUE), permitting loading of DNA polymerase. After initiation quickly degrades to an ADP-DnaA complex that is not apt for DNA replication. Binds acidic phospholipids. This chain is Chromosomal replication initiator protein DnaA, found in Erwinia tasmaniensis (strain DSM 17950 / CFBP 7177 / CIP 109463 / NCPPB 4357 / Et1/99).